Here is a 247-residue protein sequence, read N- to C-terminus: Transmembrane protein 33 (247 aa).

The residue at position 2 (alanine 2) is an N-acetylalanine. The Lumenal segment spans residues 2-31; sequence ADTTPNGPQGAGAVQFMMTNKLDTAMWLSR. A helical membrane pass occupies residues 32–52; that stretch reads LFTVYCSALFVLPLLGLHEAA. At 53–100 the chain is on the cytoplasmic side; the sequence is SFYQRALLANALTSALRLHQRLPHFQLSRAFLAQALLEDSCHYLLYSL. A helical transmembrane segment spans residues 101–121; that stretch reads IFVNSYPVTMSIFPVLLFSLL. Residues 122–155 lie on the Lumenal side of the membrane; the sequence is HAATYTKKVLDAKGSNSLPLLRSFLDKLSTNQQN. A helical membrane pass occupies residues 156–176; it reads ILKFIACNEIFLMPATVFMLF. Over 177–247 the chain is Cytoplasmic; that stretch reads SGQGSLLQPF…FISRLAPTVA (71 aa).

The protein belongs to the PER33/POM33 family. Interacts with EIF2AK3. Interacts with RTN1, RTN2, RTN3, RTN4 and ARL6IP1. Interacts with RNF5. Interacts with RNF26. Interacts with PKD2.

Its subcellular location is the endoplasmic reticulum membrane. It is found in the melanosome. The protein localises to the nucleus envelope. Acts as a regulator of the tubular endoplasmic reticulum (ER) network by modulating intracellular calcium homeostasis. Mechanistically, stimulates PKD2 calcium-dependent activity. Suppresses the RTN3/4-induced formation of the ER tubules. Positively regulates PERK-mediated and IRE1-mediated unfolded protein response signaling. Plays an essential role in VEGF-mediated release of Ca(2+) from ER stores during angiogenesis. Also plays a role in the modulation of innate immune signaling through the cGAS-STING pathway by interacting with RNF26. Participates in lipid metabolism by acting as a downstream effector of the pyruvate kinase/PKM. Forms a complex with RNF5 to facilitate polyubiquitination and subsequent degradation of SCAP on the ER membrane. This Mus musculus (Mouse) protein is Transmembrane protein 33 (Tmem33).